Here is a 259-residue protein sequence, read N- to C-terminus: uncharacterized protein (259 aa).

This is an uncharacterized protein from Schizosaccharomyces pombe (strain 972 / ATCC 24843) (Fission yeast).